We begin with the raw amino-acid sequence, 1159 residues long: DNA-directed RNA polymerase subunit beta' (1159 aa).

D398, D400, and D402 together coordinate Mg(2+). The Zn(2+) site is built by C741, C815, C822, and C825.

Belongs to the RNA polymerase beta' chain family. As to quaternary structure, the RNAP catalytic core consists of 2 alpha, 1 beta, 1 beta' and 1 omega subunit. When a sigma factor is associated with the core the holoenzyme is formed, which can initiate transcription. It depends on Mg(2+) as a cofactor. Zn(2+) is required as a cofactor.

It catalyses the reaction RNA(n) + a ribonucleoside 5'-triphosphate = RNA(n+1) + diphosphate. Its function is as follows. DNA-dependent RNA polymerase catalyzes the transcription of DNA into RNA using the four ribonucleoside triphosphates as substrates. In Porphyromonas cangingivalis, this protein is DNA-directed RNA polymerase subunit beta'.